Here is a 296-residue protein sequence, read N- to C-terminus: Nitrogenase iron protein (296 aa).

12–19 (GKGGIGKS) is a binding site for ATP. A [4Fe-4S] cluster-binding site is contributed by Cys-100. Arg-103 is subject to ADP-ribosylarginine; by dinitrogenase reductase ADP-ribosyltransferase. [4Fe-4S] cluster is bound at residue Cys-134.

Belongs to the NifH/BchL/ChlL family. As to quaternary structure, homodimer. [4Fe-4S] cluster is required as a cofactor. In terms of processing, the reversible ADP-ribosylation of Arg-103 inactivates the nitrogenase reductase and regulates nitrogenase activity.

The catalysed reaction is N2 + 8 reduced [2Fe-2S]-[ferredoxin] + 16 ATP + 16 H2O = H2 + 8 oxidized [2Fe-2S]-[ferredoxin] + 2 NH4(+) + 16 ADP + 16 phosphate + 6 H(+). The key enzymatic reactions in nitrogen fixation are catalyzed by the nitrogenase complex, which has 2 components: the iron protein and the molybdenum-iron protein. The polypeptide is Nitrogenase iron protein (Acidithiobacillus ferrooxidans (strain ATCC 23270 / DSM 14882 / CIP 104768 / NCIMB 8455) (Ferrobacillus ferrooxidans (strain ATCC 23270))).